We begin with the raw amino-acid sequence, 178 residues long: Transcription termination/antitermination protein NusG (178 aa).

Residues 126–156 (VGQQVRVNEGPFADFNGVVEEVNYERNKLRV) form the KOW domain.

This sequence belongs to the NusG family.

In terms of biological role, participates in transcription elongation, termination and antitermination. In Neisseria meningitidis serogroup B (strain ATCC BAA-335 / MC58), this protein is Transcription termination/antitermination protein NusG.